The sequence spans 464 residues: Cysteine--tRNA ligase (464 aa).

Cysteine 32 is a binding site for Zn(2+). Residues 34–44 (VTVYDDCHIGH) carry the 'HIGH' region motif. The Zn(2+) site is built by cysteine 213, histidine 238, and glutamate 242. The 'KMSKS' region signature appears at 270–274 (KMSKS). ATP is bound at residue lysine 273.

This sequence belongs to the class-I aminoacyl-tRNA synthetase family. Monomer. Zn(2+) is required as a cofactor.

The protein localises to the cytoplasm. It carries out the reaction tRNA(Cys) + L-cysteine + ATP = L-cysteinyl-tRNA(Cys) + AMP + diphosphate. The protein is Cysteine--tRNA ligase of Francisella tularensis subsp. holarctica (strain LVS).